Consider the following 457-residue polypeptide: tRNA modification GTPase MnmE (457 aa).

Positions 25, 87, and 126 each coordinate (6S)-5-formyl-5,6,7,8-tetrahydrofolate. The TrmE-type G domain maps to 223–377 (GISTAIIGRP…IEERINQLFF (155 aa)). Asn-233 provides a ligand contact to K(+). GTP contacts are provided by residues 233–238 (NVGKSS), 252–258 (TDIEGTT), and 277–280 (DTAG). A Mg(2+)-binding site is contributed by Ser-237. Residues Thr-252, Ile-254, and Thr-257 each contribute to the K(+) site. Thr-258 provides a ligand contact to Mg(2+). A (6S)-5-formyl-5,6,7,8-tetrahydrofolate-binding site is contributed by Lys-457.

It belongs to the TRAFAC class TrmE-Era-EngA-EngB-Septin-like GTPase superfamily. TrmE GTPase family. In terms of assembly, homodimer. Heterotetramer of two MnmE and two MnmG subunits. K(+) is required as a cofactor.

Its subcellular location is the cytoplasm. In terms of biological role, exhibits a very high intrinsic GTPase hydrolysis rate. Involved in the addition of a carboxymethylaminomethyl (cmnm) group at the wobble position (U34) of certain tRNAs, forming tRNA-cmnm(5)s(2)U34. This Streptococcus sanguinis (strain SK36) protein is tRNA modification GTPase MnmE.